We begin with the raw amino-acid sequence, 292 residues long: Homoserine kinase (292 aa).

84–94 (PLARGMGSSSA) lines the ATP pocket.

This sequence belongs to the GHMP kinase family. Homoserine kinase subfamily.

It is found in the cytoplasm. The enzyme catalyses L-homoserine + ATP = O-phospho-L-homoserine + ADP + H(+). It functions in the pathway amino-acid biosynthesis; L-threonine biosynthesis; L-threonine from L-aspartate: step 4/5. Its function is as follows. Catalyzes the ATP-dependent phosphorylation of L-homoserine to L-homoserine phosphate. This chain is Homoserine kinase, found in Thermus thermophilus (strain ATCC BAA-163 / DSM 7039 / HB27).